We begin with the raw amino-acid sequence, 210 residues long: DNA-directed RNA polymerases I, II, and III subunit RPABC1 (210 aa).

At Met1 the chain carries N-acetylmethionine. Lys81 is covalently cross-linked (Glycyl lysine isopeptide (Lys-Gly) (interchain with G-Cter in SUMO2)).

This sequence belongs to the archaeal Rpo5/eukaryotic RPB5 RNA polymerase subunit family. In terms of assembly, component of the RNA polymerase I (Pol I), RNA polymerase II (Pol II) and RNA polymerase III (Pol III) complexes consisting of at least 13, 12 and 17 subunits, respectively. Pol I complex consists of a ten-subunit catalytic core composed of POLR1A/RPA1, POLR1B/RPA2, POLR1C/RPAC1, POLR1D/RPAC2, POLR1H/RPA12, POLR2E/RPABC1, POLR2F/RPABC2, POLR2H/RPABC3, POLR2K/RPABC4 and POLR2L/RPABC5; a mobile stalk subunit POLR1F/RPA43 protruding from the core and additional subunits homologous to general transcription factors POLR1E/RPA49 and POLR1G/RPA34. Part of Pol I pre-initiation complex (PIC), in which Pol I core assembles with RRN3 and promoter-bound UTBF and SL1/TIF-IB complex. Pol II complex contains a ten-subunit catalytic core composed of POLR2A/RPB1, POLR2B/RPB2, POLR2C/RPB3, POLR2I/RPB9, POLR2J/RPB11, POLR2E/RPABC1, POLR2F/RPABC2, POLR2H/RPABC3, POLR2K/RPABC4 and POLR2L/RPABC5 and a mobile stalk composed of two subunits POLR2D/RPB4 and POLR2G/RPB7. Part of Pol II(G) complex, in which Pol II core associates with an additional subunit POLR2M; unlike conventional Pol II, Pol II(G) functions as a transcriptional repressor. Part of TBP-based Pol II pre-initiation complex (PIC), in which Pol II core assembles with general transcription factors and other specific initiation factors including GTF2E1, GTF2E2, GTF2F1, GTF2F2, TCEA1, ERCC2, ERCC3, GTF2H2, GTF2H3, GTF2H4, GTF2H5, GTF2A1, GTF2A2, GTF2B and TBP; this large multi-subunit PIC complex mediates DNA unwinding and targets Pol II core to the transcription start site where the first phosphodiester bond forms. In Pol II complex, this subunit is present in 2-fold molar excess over the other subunits. Pol III complex consists of a ten-subunit catalytic core composed of POLR3A/RPC1, POLR3B/RPC2, POLR1C/RPAC1, POLR1D/RPAC2, POLR3K/RPC10, POLR2E/RPABC1, POLR2F/RPABC2, POLR2H/RPABC3, POLR2K/RPABC4 and POLR2L/RPABC5; a mobile stalk composed of two subunits POLR3H/RPC8 and CRCP/RPC9, protruding from the core and functioning primarily in transcription initiation; and additional subunits homologous to general transcription factors of the RNA polymerase II machinery, POLR3C/RPC3-POLR3F/RPC6-POLR3G/RPC7 heterotrimer required for transcription initiation and POLR3D/RPC4-POLR3E/RPC5 heterodimer involved in both transcription initiation and termination. Component of the PAQosome complex which is responsible for the biogenesis of several protein complexes and which consists of R2TP complex members RUVBL1, RUVBL2, RPAP3 and PIH1D1, URI complex members PFDN2, PFDN6, PDRG1, UXT and URI1 as well as ASDURF, POLR2E and DNAAF10/WDR92. Interacts with URI1.

It localises to the nucleus. The protein localises to the nucleolus. Its function is as follows. DNA-dependent RNA polymerase catalyzes the transcription of DNA into RNA using the four ribonucleoside triphosphates as substrates. Common component of RNA polymerases I, II and III which synthesize ribosomal RNA precursors, mRNA precursors and many functional non-coding RNAs, and small RNAs, such as 5S rRNA and tRNAs, respectively. Pol II is the central component of the basal RNA polymerase II transcription machinery. Pols are composed of mobile elements that move relative to each other. In Pol II, POLR2E/RPABC1 is part of the lower jaw surrounding the central large cleft and thought to grab the incoming DNA template. Seems to be the major component in this process. This chain is DNA-directed RNA polymerases I, II, and III subunit RPABC1 (POLR2E), found in Pongo abelii (Sumatran orangutan).